A 255-amino-acid polypeptide reads, in one-letter code: Diphthine--ammonia ligase (255 aa).

The protein belongs to the Diphthine--ammonia ligase family.

The catalysed reaction is diphthine-[translation elongation factor 2] + NH4(+) + ATP = diphthamide-[translation elongation factor 2] + AMP + diphosphate + H(+). It functions in the pathway protein modification; peptidyl-diphthamide biosynthesis. In terms of biological role, amidase that catalyzes the last step of diphthamide biosynthesis using ammonium and ATP. Diphthamide biosynthesis consists in the conversion of an L-histidine residue in the translation elongation factor eEF-2 (EEF2) to diphthamide. The protein is Diphthine--ammonia ligase (dph6) of Danio rerio (Zebrafish).